The following is a 156-amino-acid chain: Large ribosomal subunit protein uL22 (156 aa).

It belongs to the universal ribosomal protein uL22 family. In terms of assembly, part of the 50S ribosomal subunit.

In terms of biological role, this protein binds specifically to 23S rRNA. It makes multiple contacts with different domains of the 23S rRNA in the assembled 50S subunit and ribosome. Functionally, the globular domain of the protein is located near the polypeptide exit tunnel on the outside of the subunit, while an extended beta-hairpin is found that lines the wall of the exit tunnel in the center of the 70S ribosome. The protein is Large ribosomal subunit protein uL22 of Sulfolobus acidocaldarius (strain ATCC 33909 / DSM 639 / JCM 8929 / NBRC 15157 / NCIMB 11770).